The following is a 365-amino-acid chain: 3-isopropylmalate dehydrogenase (365 aa).

78–91 (GKKWNNLPIEKRPE) is an NAD(+) binding site. Positions 99, 109, 139, and 228 each coordinate substrate. Residues Asp228, Asp252, and Asp256 each coordinate Mg(2+). 286 to 298 (GSAPDIAGKNIAN) lines the NAD(+) pocket.

The protein belongs to the isocitrate and isopropylmalate dehydrogenases family. LeuB type 1 subfamily. Homodimer. Mg(2+) serves as cofactor. Mn(2+) is required as a cofactor.

The protein localises to the cytoplasm. The catalysed reaction is (2R,3S)-3-isopropylmalate + NAD(+) = 4-methyl-2-oxopentanoate + CO2 + NADH. It functions in the pathway amino-acid biosynthesis; L-leucine biosynthesis; L-leucine from 3-methyl-2-oxobutanoate: step 3/4. Functionally, catalyzes the oxidation of 3-carboxy-2-hydroxy-4-methylpentanoate (3-isopropylmalate) to 3-carboxy-4-methyl-2-oxopentanoate. The product decarboxylates to 4-methyl-2 oxopentanoate. The protein is 3-isopropylmalate dehydrogenase of Buchnera aphidicola subsp. Macrosiphoniella ludovicianae.